The primary structure comprises 459 residues: MQIQFHLYNTLSRTKEVFNPQDQANVKMYVCGPTVYYNPHIGNSRSGVVYDLLYRIVIKIFGEKAVKYVRNITDVDDKIIDRAALLGVTIDELTDKVTKEFHKNMAYLGCMLPSIEPKATKHIDVMIAIIERLIAKDHAYIADNHVYFDVLSAPNYTELSNRNLEEMFEGVHVENSKTKKNPQDFVLWKPAKQNESANMNFESPWGLGRPGWHIECSAMSYKYLGENFDIHGGGADLIFPHHTNEIAQSRCAFPSSTYAKYWVHNGFLTVNGEKMSKSLGNFITVRDLMDKQIQGEVVRLFLLSSHYRRPLDYNDKAIEDAKKTLDYWYRAIENINVQKIDLPHDFMQSLLDDMNTPLAVKIINDYAKGVFISKTEEERQLNASAIITCANFIGLMNKTPHEWFNSGVDELYINELVNKRLEAKKQKNWLLADQIRNQLLEEKIILEDQPDGTTIWRKE.

Zn(2+) is bound at residue C31. The 'HIGH' region motif lies at 33–43 (PTVYYNPHIGN). Residues C216, H241, and E245 each coordinate Zn(2+). Residues 274 to 278 (KMSKS) carry the 'KMSKS' region motif. Residue K277 participates in ATP binding.

It belongs to the class-I aminoacyl-tRNA synthetase family. In terms of assembly, monomer. Zn(2+) is required as a cofactor.

It is found in the cytoplasm. It catalyses the reaction tRNA(Cys) + L-cysteine + ATP = L-cysteinyl-tRNA(Cys) + AMP + diphosphate. The sequence is that of Cysteine--tRNA ligase from Rickettsia peacockii (strain Rustic).